A 166-amino-acid polypeptide reads, in one-letter code: Small ribosomal subunit protein uS9 (166 aa).

The disordered stretch occupies residues K135–R166. Residues R142–K151 are compositionally biased toward basic and acidic residues. Basic residues predominate over residues Y152–R166.

Belongs to the universal ribosomal protein uS9 family.

The polypeptide is Small ribosomal subunit protein uS9 (Mycolicibacterium paratuberculosis (strain ATCC BAA-968 / K-10) (Mycobacterium paratuberculosis)).